The sequence spans 384 residues: Deoxyguanosinetriphosphate triphosphohydrolase-like protein (384 aa).

The region spanning 62–198 (RLTHSLEVST…AALADDISYI (137 aa)) is the HD domain.

The protein belongs to the dGTPase family. Type 2 subfamily.

The chain is Deoxyguanosinetriphosphate triphosphohydrolase-like protein from Rickettsia rickettsii (strain Iowa).